Here is a 484-residue protein sequence, read N- to C-terminus: NADH-ubiquinone oxidoreductase chain 4 (484 aa).

Transmembrane regions (helical) follow at residues methionine 1–glycine 21, leucine 33–aspartate 53, valine 77–leucine 97, tyrosine 109–aspartate 129, isoleucine 130–isoleucine 150, phenylalanine 162–isoleucine 182, leucine 206–valine 226, proline 236–methionine 256, phenylalanine 270–leucine 290, phenylalanine 295–phenylalanine 315, leucine 326–valine 346, tyrosine 365–leucine 385, valine 405–tyrosine 425, and phenylalanine 448–isoleucine 468.

It belongs to the complex I subunit 4 family.

The protein resides in the mitochondrion inner membrane. It catalyses the reaction a ubiquinone + NADH + 5 H(+)(in) = a ubiquinol + NAD(+) + 4 H(+)(out). Core subunit of the mitochondrial membrane respiratory chain NADH dehydrogenase (Complex I) that is believed to belong to the minimal assembly required for catalysis. Complex I functions in the transfer of electrons from NADH to the respiratory chain. The immediate electron acceptor for the enzyme is believed to be ubiquinone. This is NADH-ubiquinone oxidoreductase chain 4 (ND4) from Mycosarcoma maydis (Corn smut fungus).